The primary structure comprises 367 residues: UDP-galactopyranose mutase (367 aa).

FAD-binding positions include Phe-12, 31–32, Asn-39, and 56–57; these read EK and HI. Residue Phe-12 coordinates UDP-alpha-D-galactose. UDP-alpha-D-galactose contacts are provided by Asn-80, Thr-152, Trp-156, and Tyr-181. 212 to 213 contributes to the FAD binding site; the sequence is DF. Residues Asn-268, Arg-278, and Tyr-311 each contribute to the UDP-alpha-D-galactose site. An FAD-binding site is contributed by Arg-340. Tyr-346 is a binding site for UDP-alpha-D-galactose. Residue 347–352 participates in FAD binding; sequence YDMHQV.

As to quaternary structure, homodimer. The cofactor is FAD.

The catalysed reaction is UDP-alpha-D-galactose = UDP-alpha-D-galactofuranose. It participates in bacterial outer membrane biogenesis; lipopolysaccharide biosynthesis. In terms of biological role, catalyzes the interconversion through a 2-keto intermediate of uridine diphosphogalactopyranose (UDP-GalP) into uridine diphosphogalactofuranose (UDP-GalF). The protein is UDP-galactopyranose mutase (glf) of Escherichia coli (strain K12).